The primary structure comprises 1553 residues: Dual oxidase 1 (1553 aa).

The signal sequence occupies residues 1 to 21 (MGFRLALAWTLLVGPWMPMGA). At 22 to 596 (RNSISWEVQR…YFKGSGFGFG (575 aa)) the chain is on the extracellular side. The tract at residues 26 to 593 (SWEVQRFDGW…MRDYFKGSGF (568 aa)) is peroxidase-like; mediates peroxidase activity. Asn94, Asn342, Asn354, and Asn534 each carry an N-linked (GlcNAc...) asparagine glycan. A helical transmembrane segment spans residues 597-617 (VTIGTLCCFPLVSLLSAWIVA). Topologically, residues 618–1046 (QLRRRNFKRL…KRFVENYRRH (429 aa)) are cytoplasmic. EF-hand domains follow at residues 815-850 (PQDM…FMKG), 851-886 (SPEE…FIEI), and 895-930 (QLTE…HDSE). The Ca(2+) site is built by Asp828, Asp830, Asn832, Tyr834, Glu839, Asp864, Asp866, Asn868, and Glu875. The segment at 956–1250 (YISQEKLCPS…GSFALIQLPR (295 aa)) is interaction with TXNDC11. The chain crosses the membrane as a helical span at residues 1047-1067 (IGCLAVFYTIAGGLFLERAYY). The Extracellular portion of the chain corresponds to 1068 to 1082 (YAFAAHHMGITDTTR). A helical transmembrane segment spans residues 1083–1103 (VGIILSRGTAASISFMFSYIL). The Ferric oxidoreductase domain maps to 1089–1271 (RGTAASISFM…YVGDKLVSLS (183 aa)). The Cytoplasmic portion of the chain corresponds to 1104–1138 (LTMCRNLITFLRETFLNRYVPFDAAVDFHRLIAST). The helical transmembrane segment at 1139–1159 (AIILTVLHSAGHVVNVYLFSI) threads the bilayer. The Extracellular portion of the chain corresponds to 1160–1190 (SPLSVLSCLFPGLFHDNGSEFPQKYYWWFFQ). A helical transmembrane segment spans residues 1191–1211 (TVPGLTGVMLLLILAIMYVFA). Topologically, residues 1212-1228 (SHHFRRCSFRGFWLTHH) are cytoplasmic. A helical transmembrane segment spans residues 1229–1249 (LYILLYMLLIIHGSFALIQLP). Position 1250 (Arg1250) is a topological domain, extracellular. The chain crosses the membrane as a helical span at residues 1251 to 1271 (FHIFFLVPALIYVGDKLVSLS). Residues 1272–1378 (RKKVEISVVK…DGPFGEGHQE (107 aa)) enclose the FAD-binding FR-type domain. The Cytoplasmic portion of the chain corresponds to 1272-1553 (RKKVEISVVK…THFSHHYENF (282 aa)).

It in the N-terminal section; belongs to the peroxidase family. As to quaternary structure, interacts with TXNDC11, TPO and CYBA. Post-translationally, N-glycosylated. As to expression, specifically expressed in thyroid.

The protein resides in the apical cell membrane. It catalyses the reaction NADH + O2 + H(+) = H2O2 + NAD(+). The enzyme catalyses NADPH + O2 + H(+) = H2O2 + NADP(+). The protein operates within hormone biosynthesis; thyroid hormone biosynthesis. Its activity is regulated as follows. The NADPH oxidase activity is calcium-dependent. Peroxidase activity is inhibited by aminobenzohydrazide. Generates hydrogen peroxide which is required for the activity of thyroid peroxidase/TPO and lactoperoxidase/LPO. Plays a role in thyroid hormones synthesis and lactoperoxidase-mediated antimicrobial defense at the surface of mucosa. May have its own peroxidase activity through its N-terminal peroxidase-like domain. The protein is Dual oxidase 1 (DUOX1) of Sus scrofa (Pig).